We begin with the raw amino-acid sequence, 388 residues long: Putative N(4)-(beta-N-acetylglucosaminyl)-L-asparaginase GL17147 (388 aa).

The N-terminal stretch at 1 to 20 (MYKAQYLWLFGLVLISRSAT) is a signal peptide. Intrachain disulfides connect C94-C99 and C193-C209. T240 serves as the catalytic Nucleophile. Substrate contacts are provided by residues 268–271 (RVGD) and 291–294 (TGDG). A disulfide bridge connects residues C351 and C378.

It belongs to the Ntn-hydrolase family. In terms of assembly, heterotetramer of two alpha and two beta chains arranged as a dimer of alpha/beta heterodimers. In terms of processing, cleaved into an alpha and beta chain by autocatalysis; this activates the enzyme. The N-terminal residue of the beta subunit is responsible for the nucleophile hydrolase activity.

The catalysed reaction is N(4)-(beta-N-acetyl-D-glucosaminyl)-L-asparagine + H2O = N-acetyl-beta-D-glucosaminylamine + L-aspartate + H(+). In terms of biological role, cleaves the GlcNAc-Asn bond which joins oligosaccharides to the peptide of asparagine-linked glycoproteins. This Drosophila persimilis (Fruit fly) protein is Putative N(4)-(beta-N-acetylglucosaminyl)-L-asparaginase GL17147.